The primary structure comprises 336 residues: Phospho-N-acetylmuramoyl-pentapeptide-transferase (336 aa).

Transmembrane regions (helical) follow at residues 3-23 (LTLIAAIISFMVSAFTMPYFI), 53-73 (GGTVFLLVATAVSLLVSLFSI), 78-98 (SLALISGILSIVVIYGIIGFL), 118-138 (LALQLAGGLMFYFLHVSPSGI), 143-163 (VFGYQLSLGIFYLFFVLFWVV), 174-194 (GIDGLASISVVISLVTYGVIA), 200-220 (FDVLLLIGTMIGALLGFFLFN), 226-246 (VFMGDVGSLALGAMLAAISIA), 251-271 (WTLLIIGIVYVLETSSVMLQV), and 316-336 (AFLWGVGSLASLLVLAILYVF).

The protein belongs to the glycosyltransferase 4 family. MraY subfamily. Requires Mg(2+) as cofactor.

The protein localises to the cell membrane. The catalysed reaction is UDP-N-acetyl-alpha-D-muramoyl-L-alanyl-gamma-D-glutamyl-L-lysyl-D-alanyl-D-alanine + di-trans,octa-cis-undecaprenyl phosphate = Mur2Ac(oyl-L-Ala-gamma-D-Glu-L-Lys-D-Ala-D-Ala)-di-trans,octa-cis-undecaprenyl diphosphate + UMP. It functions in the pathway cell wall biogenesis; peptidoglycan biosynthesis. Catalyzes the initial step of the lipid cycle reactions in the biosynthesis of the cell wall peptidoglycan: transfers peptidoglycan precursor phospho-MurNAc-pentapeptide from UDP-MurNAc-pentapeptide onto the lipid carrier undecaprenyl phosphate, yielding undecaprenyl-pyrophosphoryl-MurNAc-pentapeptide, known as lipid I. This is Phospho-N-acetylmuramoyl-pentapeptide-transferase from Streptococcus pyogenes serotype M6 (strain ATCC BAA-946 / MGAS10394).